A 173-amino-acid chain; its full sequence is Photosystem I assembly protein Ycf3 (173 aa).

TPR repeat units lie at residues 35 to 68, 72 to 105, and 120 to 153; these read AFSY…EEDP, SYIL…NFKL, and GVQA…APDN.

It belongs to the Ycf3 family.

It is found in the plastid. It localises to the chloroplast thylakoid membrane. Essential for the assembly of the photosystem I (PSI) complex. May act as a chaperone-like factor to guide the assembly of the PSI subunits. This Pyropia yezoensis (Susabi-nori) protein is Photosystem I assembly protein Ycf3.